Consider the following 228-residue polypeptide: Small ribosomal subunit protein uS3 (228 aa).

In terms of domain architecture, KH type-2 spans 39–107 (VRAYLQDKLK…PVHINIEEIR (69 aa)).

This sequence belongs to the universal ribosomal protein uS3 family. As to quaternary structure, part of the 30S ribosomal subunit. Forms a tight complex with proteins S10 and S14.

Binds the lower part of the 30S subunit head. Binds mRNA in the 70S ribosome, positioning it for translation. This Ectopseudomonas mendocina (strain ymp) (Pseudomonas mendocina) protein is Small ribosomal subunit protein uS3.